The sequence spans 364 residues: Probable endopolygalacturonase B (364 aa).

Positions 1–20 (MHFFQSSLVAATMGAALVAA) are cleaved as a signal peptide. Residues 21–29 (APAADLETR) constitute a propeptide that is removed on maturation. Cysteines 32 and 47 form a disulfide. Residues Asn-138 and Asn-141 are each glycosylated (N-linked (GlcNAc...) asparagine). PbH1 repeat units lie at residues 159 to 188 (SDHL…DVGS), 189 to 210 (STYI…AVNS), 211 to 231 (GEHI…SIGS), 240 to 261 (VNDV…RIKT), 269 to 291 (VTGV…VVQQ), and 303 to 324 (TNGV…TSSA). Asp-203 acts as the Proton donor in catalysis. Cys-205 and Cys-221 are oxidised to a cystine. His-225 is an active-site residue. Cys-331 and Cys-336 are joined by a disulfide. An N-linked (GlcNAc...) asparagine glycan is attached at Asn-338. Residues Cys-355 and Cys-364 are joined by a disulfide bond.

This sequence belongs to the glycosyl hydrolase 28 family.

The protein localises to the secreted. The catalysed reaction is (1,4-alpha-D-galacturonosyl)n+m + H2O = (1,4-alpha-D-galacturonosyl)n + (1,4-alpha-D-galacturonosyl)m.. Its function is as follows. Involved in maceration and soft-rotting of plant tissue. Hydrolyzes the 1,4-alpha glycosidic bonds of de-esterified pectate in the smooth region of the plant cell wall. This is Probable endopolygalacturonase B (pgaB) from Aspergillus fumigatus (strain CBS 144.89 / FGSC A1163 / CEA10) (Neosartorya fumigata).